The primary structure comprises 94 residues: Pyrimidine/purine nucleoside phosphorylase (94 aa).

The protein belongs to the nucleoside phosphorylase PpnP family.

It carries out the reaction a purine D-ribonucleoside + phosphate = a purine nucleobase + alpha-D-ribose 1-phosphate. The enzyme catalyses adenosine + phosphate = alpha-D-ribose 1-phosphate + adenine. The catalysed reaction is cytidine + phosphate = cytosine + alpha-D-ribose 1-phosphate. It catalyses the reaction guanosine + phosphate = alpha-D-ribose 1-phosphate + guanine. It carries out the reaction inosine + phosphate = alpha-D-ribose 1-phosphate + hypoxanthine. The enzyme catalyses thymidine + phosphate = 2-deoxy-alpha-D-ribose 1-phosphate + thymine. The catalysed reaction is uridine + phosphate = alpha-D-ribose 1-phosphate + uracil. It catalyses the reaction xanthosine + phosphate = alpha-D-ribose 1-phosphate + xanthine. Functionally, catalyzes the phosphorolysis of diverse nucleosides, yielding D-ribose 1-phosphate and the respective free bases. Can use uridine, adenosine, guanosine, cytidine, thymidine, inosine and xanthosine as substrates. Also catalyzes the reverse reactions. This chain is Pyrimidine/purine nucleoside phosphorylase, found in Shigella dysenteriae serotype 1 (strain Sd197).